Here is a 131-residue protein sequence, read N- to C-terminus: MARKKGTSTRKKQKKLSFDYGVVHIKSTFNNTIITLTDKDGNTLTWASGGTVGFEGTRKGTPYAAQLAADKVAREALRMGIKRVDVLVKGPGPGREPAIRTLQGAGLEINQIKDVTPIPFNGCRPKKRRRV.

The protein belongs to the universal ribosomal protein uS11 family. In terms of assembly, part of the 30S ribosomal subunit. Interacts with proteins S7 and S18. Binds to IF-3.

Located on the platform of the 30S subunit, it bridges several disparate RNA helices of the 16S rRNA. Forms part of the Shine-Dalgarno cleft in the 70S ribosome. The polypeptide is Small ribosomal subunit protein uS11 (Thermotoga neapolitana (strain ATCC 49049 / DSM 4359 / NBRC 107923 / NS-E)).